Reading from the N-terminus, the 530-residue chain is MDAQSVAPVVLVILDGWGYREAPEGNAVLAARTPVVDSLWATYPHTLLQASGRAVGLPSGQMGNSEVGHLTLGAGRVVPQELVRISDAIETGSLFHEPLLVEVCHRLKEQGGRFHFIGLCSEGGVHSHIDHLYGLLKLAAQAGIPAYVHAITDGRDTLPRDGARVLAALEKELQWLGSGVIATLSGRYYAMDRDRRWERTQKAYEILTEDGPGCGRSAAEVMEDFYAQDITDEFIPPTRLAPGAVQSGDAVIFFNFRPDRARQLTQAFVCPDFSGFQRRLIPDLTFITMTQYDPTLPVQVLFKPQNLDHLLGQVVSEAGLKQLRIAETEKYAHVTYFFNGGIEQPFPGEDRILVQSPLVATYDQMPEMSAVEVTDKAIEAIARREYSLVVLNYANPDMVGHTGNFKATVRALETVDRCLGRLLAAVVDVGGTTLIVADHGNAELMWDEQGNPWTAHTNNPVPCILVEGERRKIPGRGGDVKLRSGGTLADVGPTLLEILGLPQPPEMTGQSLLQPAEYTILQRQPAPVGR.

Mn(2+) contacts are provided by D15 and S65. Residue S65 is the Phosphoserine intermediate of the active site. Substrate-binding positions include H126, 155-156, R187, R193, 257-260, and K330; these read RD and RPDR. Residues D397, H401, D438, H439, and H456 each contribute to the Mn(2+) site.

The protein belongs to the BPG-independent phosphoglycerate mutase family. As to quaternary structure, monomer. Mn(2+) serves as cofactor.

It catalyses the reaction (2R)-2-phosphoglycerate = (2R)-3-phosphoglycerate. It functions in the pathway carbohydrate degradation; glycolysis; pyruvate from D-glyceraldehyde 3-phosphate: step 3/5. Functionally, catalyzes the interconversion of 2-phosphoglycerate and 3-phosphoglycerate. The protein is 2,3-bisphosphoglycerate-independent phosphoglycerate mutase of Synechococcus sp. (strain JA-3-3Ab) (Cyanobacteria bacterium Yellowstone A-Prime).